The following is a 601-amino-acid chain: Sodium-dependent phosphate transport protein 2C (601 aa).

The Cytoplasmic portion of the chain corresponds to 1 to 75; the sequence is MPNSLAGGQV…RRVVSSFLKA (75 aa). Ser-4 carries the post-translational modification Phosphoserine. The chain crosses the membrane as a helical span at residues 76-96; the sequence is CGLLGSLYFFICSLDILSSAF. The Extracellular segment spans residues 97 to 110; the sequence is QLLGSKMAGDIFKD. The helical transmembrane segment at 111–131 threads the bilayer; it reads NVVLSNPVAGLVIGVLVTVLV. Topologically, residues 132–187 are cytoplasmic; it reads QSSSTSSSIVVSMVASKLLTVQVSVPIIMGVNVGTSITSTLVSMAQSGDRDEFQRA. The helical transmembrane segment at 188–208 threads the bilayer; that stretch reads FSGSAVHGIFNWLTVLVLLPL. Over 209 to 324 the chain is Extracellular; sequence ESATAALERL…FAGSKLTDLA (116 aa). N-linked (GlcNAc...) asparagine glycosylation is found at Asn-264, Asn-267, and Asn-299. An intrachain disulfide couples Cys-275 to Cys-311. The helical transmembrane segment at 325–345 threads the bilayer; it reads VGFILLAGSLLVLCVCLVLIV. The Cytoplasmic portion of the chain corresponds to 346-369; the sequence is KLLNSVLKGRIAQAVKTVINADFP. A helical transmembrane segment spans residues 370–390; that stretch reads FPFGWLSGYLAILVGAGLTFL. Residues 391 to 441 lie on the Extracellular side of the membrane; it reads LQSSSVFTAAIVPLMGVGVIDLERAYPLFLGSNIGTTTTALLAALASPADM. A helical membrane pass occupies residues 442–462; it reads LIFAVQVALIHFFFNLAGILL. Topologically, residues 463–487 are cytoplasmic; sequence WYLVPVLRLPIPLAKRFGNLTAQYR. The chain crosses the membrane as a helical span at residues 488–508; that stretch reads WVAIVYLLLTFLLLPLAAFGL. The Extracellular portion of the chain corresponds to 509 to 512; it reads SLAG. Residues 513–533 traverse the membrane as a helical segment; the sequence is GTVLAAVGGPLVGLVLLIILV. Over 534-601 the chain is Cytoplasmic; that stretch reads NVLQQHRPSW…NPQVIASQQL (68 aa).

It belongs to the SLC34A transporter family. Expressed only in the kidney.

The protein localises to the apical cell membrane. It carries out the reaction 2 Na(+)(out) + phosphate(out) = 2 Na(+)(in) + phosphate(in). Functionally, involved in actively transporting phosphate into cells via Na(+) cotransport in the renal brush border membrane. The cotransport has a Na(+):Pi stoichiometry of 2:1 and is electroneutral. This Mus musculus (Mouse) protein is Sodium-dependent phosphate transport protein 2C (Slc34a3).